A 529-amino-acid chain; its full sequence is uncharacterized protein (529 aa).

Positions 26-58 (CDSCRKQKTRCLAGSVEDENRACLRCRSLNMDC) form a DNA-binding region, zn(2)-C6 fungal-type.

It is found in the nucleus. This is an uncharacterized protein from Schizosaccharomyces pombe (strain 972 / ATCC 24843) (Fission yeast).